A 367-amino-acid polypeptide reads, in one-letter code: Prenyltransferase idtC (367 aa).

A signal peptide spans 1-22 (MTTLAWFAGRSMVLDLAALTSA). Residues 32–42 (TSTPTSTPTST) show a composition bias toward low complexity. A disordered region spans residues 32-84 (TSTPTSTPTSTDKAGTPPGSTIHHYGYPQGSVTKPNNSKTEKENGSPKDSKGN). N-linked (GlcNAc...) asparagine glycosylation is present at Asn-67. The span at 70 to 82 (KTEKENGSPKDSK) shows a compositional bias: basic and acidic residues. His-132 provides a ligand contact to substrate. Positions 139 and 143 each coordinate Mg(2+). Residue Arg-148 participates in substrate binding. Asn-150 carries N-linked (GlcNAc...) asparagine glycosylation. Lys-233, Thr-234, Gln-264, Asn-271, and Lys-281 together coordinate substrate.

This sequence belongs to the FPP/GGPP synthase family. Mg(2+) serves as cofactor.

It participates in secondary metabolite biosynthesis. Its function is as follows. Prenyltransferase; part of the gene cluster that mediates the biosynthesis of paspalitrems, indole-diterpene (IDT) mycotoxins that are potent tremorgens in mammals. The geranylgeranyl diphosphate (GGPP) synthase idtG is proposed to catalyze the first step in IDT biosynthesis via catalysis of a series of iterative condensations of isopentenyl diphosphate (IPP) with dimethylallyl diphosphate (DMAPP), geranyl diphosphate (GPP), and farnesyl diphosphate (FPP), to form GGPP. Condensation of indole-3-glycerol phosphate with GGPP by the prenyltransferase idtC then forms 3-geranylgeranylindole (3-GGI). Epoxidation of the two terminal alkenes of the geranylgeranyl moiety by the FAD-dependent monooxygenase idtM, and cyclization by the terpene cyclase idtB then leads to the production of paspaline. The cytochrome P450 monooxygenase idtP then catalyzes oxidative elimination of the pendant methyl group at C-12 of paspaline and generates the C-10 ketone to yield 13-desoxypaxilline. The cytochrome P450 monooxygenase idtQ may catalyze the C-13 oxidation of 13-desoxypaxilline to afford paxilline. Considering that both paspalicine and paxilline were detected in C.paspali, idtQ also catalyzes the formation of paspalinine from 13-desoxypaxilline via paspalicine as an intermediate. Finally, the alpha-prenyltransferase idtF prenylates paspalinine at the C-20 or the C-21 positions to yield paspalitrems A and C, respectively. The hydroxylation of paspalitrem A at C-32 by a still unknown oxidase affords paspalitrem B. The sequence is that of Prenyltransferase idtC from Claviceps paspali (Rye ergot fungus).